The primary structure comprises 519 residues: Cytosol aminopeptidase (519 aa).

A Phosphoserine modification is found at Ser-42. Lys-45 carries the post-translational modification N6-succinyllysine. At Ser-54 the chain carries Phosphoserine. N6-succinyllysine occurs at positions 61 and 103. Phosphoserine is present on residues Ser-180 and Ser-194. Zn(2+)-binding residues include Leu-202 and Met-203. Lys-221 carries the post-translational modification N6-acetyllysine; alternate. Residue Lys-221 is modified to N6-succinyllysine; alternate. Ser-238 is subject to Phosphoserine. The Zn(2+) site is built by Lys-282 and Asp-287. Residues Lys-282, Asp-287, Ser-292, and Lys-294 each contribute to the substrate site. A Mg(2+)-binding site is contributed by Asp-287. Lys-294 is a catalytic residue. 4 residues coordinate Zn(2+): Arg-303, Asp-305, Asp-364, and Glu-366. Positions 305 and 364 each coordinate substrate. Residues Asp-364 and Glu-366 each contribute to the Mg(2+) site. Residue Arg-368 is part of the active site. Lys-455 carries the post-translational modification N6-acetyllysine; alternate. N6-succinyllysine; alternate is present on Lys-455. Residue Lys-476 is modified to N6-succinyllysine. Lys-489 bears the N6-acetyllysine; alternate mark. Lys-489 bears the N6-succinyllysine; alternate mark.

Belongs to the peptidase M17 family. Homohexamer. Zn(2+) is required as a cofactor. Requires Mn(2+) as cofactor.

The protein resides in the cytoplasm. It carries out the reaction Release of an N-terminal amino acid, Xaa-|-Yaa-, in which Xaa is preferably Leu, but may be other amino acids including Pro although not Arg or Lys, and Yaa may be Pro. Amino acid amides and methyl esters are also readily hydrolyzed, but rates on arylamides are exceedingly low.. The catalysed reaction is an S-substituted L-cysteinylglycine + H2O = an S-substituted L-cysteine + glycine. It catalyses the reaction L-cysteinylglycine + H2O = L-cysteine + glycine. The enzyme catalyses S-benzyl-L-cysteinylglycine + H2O = S-benzyl-L-cysteine + glycine. It carries out the reaction Release of N-terminal proline from a peptide.. With respect to regulation, bimane-S-cysteinylglycine-hydrolyzing activity is inhibited by o-phenanthroline or bestatin, and is activated by the addition of zinc chloride. Cytosolic metallopeptidase that catalyzes the removal of unsubstituted N-terminal hydrophobic amino acids from various peptides. The presence of Zn(2+) ions is essential for the peptidase activity, and the association with other cofactors can modulate the substrate spectificity of the enzyme. For instance, in the presence of Mn(2+), it displays a specific Cys-Gly hydrolyzing activity of Cys-Gly-S-conjugates. Involved in the metabolism of glutathione and in the degradation of glutathione S-conjugates, which may play a role in the control of the cell redox status. The sequence is that of Cytosol aminopeptidase from Rattus norvegicus (Rat).